The chain runs to 381 residues: Neuropeptide Y receptor type 2 (381 aa).

Residues 1–35 (MGPIGAEADENQTVEEMKVEQYGPQTTPRGELVPD) are disordered. Over 1-51 (MGPIGAEADENQTVEEMKVEQYGPQTTPRGELVPDPEPELIDSTKLIEVQV) the chain is Extracellular. A glycan (N-linked (GlcNAc...) asparagine) is linked at Asn-11. The helical transmembrane segment at 52–72 (VLILAYCSIILLGVIGNSLVI) threads the bilayer. Over 73–86 (HVVIKFKSMRTVTN) the chain is Cytoplasmic. A helical transmembrane segment spans residues 87–107 (FFIANLAVADLLVNTLCLPFT). Residues 108–124 (LTYTLMGEWKMGPVLCH) are Extracellular-facing. A disulfide bridge connects residues Cys-123 and Cys-203. The helical transmembrane segment at 125 to 145 (LVPYAQGLAVQVSTITLTVIA) threads the bilayer. Topologically, residues 146 to 165 (LDRHRCIVYHLESKISKRIS) are cytoplasmic. A helical transmembrane segment spans residues 166-186 (FLIIGLAWGISALLASPLAIF). Residues 187 to 216 (REYSLIEIIPDFEIVACTEKWPGEEKSIYG) are Extracellular-facing. The chain crosses the membrane as a helical span at residues 217-237 (TVYSLSSLLILYVLPLGIISF). The Cytoplasmic segment spans residues 238 to 268 (SYTRIWSKLKNHVSPGAANDHYHQRRQKTTK). Residues 269-289 (MLVCVVVVFAVSWLPLHAFQL) traverse the membrane as a helical segment. At 290-304 (AVDIDSQVLDLKEYK) the chain is on the extracellular side. Residues 305–325 (LIFTVFHIIAMCSTFANPLLY) form a helical membrane-spanning segment. Residues 326–381 (GWMNSNYRKAFLSAFRCEQRLDAIHSEVSVTFKAKKNLEVRKNSGPNDSFTEATNV) lie on the Cytoplasmic side of the membrane. The S-palmitoyl cysteine moiety is linked to residue Cys-342.

The protein belongs to the G-protein coupled receptor 1 family. As to expression, high levels in amygdala, corpus callosum, hippocampus and subthalamic nucleus. Also detectable in caudate nucleus, hypothalamus and substantia nigra.

It is found in the cell membrane. In terms of biological role, receptor for neuropeptide Y and peptide YY. The rank order of affinity of this receptor for pancreatic polypeptides is PYY &gt; NPY &gt; PYY (3-36) &gt; NPY (2-36) &gt; [Ile-31, Gln-34] PP &gt; [Leu-31, Pro-34] NPY &gt; PP, [Pro-34] PYY and NPY free acid. The chain is Neuropeptide Y receptor type 2 (NPY2R) from Homo sapiens (Human).